A 128-amino-acid polypeptide reads, in one-letter code: Small ribosomal subunit protein eS8 (128 aa).

Residues 1-31 form a disordered region; that stretch reads MAWYQGNDLRKPTGGKKTRHRKKRKHELGRP. Over residues 13–27 the composition is skewed to basic residues; sequence TGGKKTRHRKKRKHE.

Belongs to the eukaryotic ribosomal protein eS8 family. Part of the 30S ribosomal subunit.

The polypeptide is Small ribosomal subunit protein eS8 (Staphylothermus marinus (strain ATCC 43588 / DSM 3639 / JCM 9404 / F1)).